Here is a 70-residue protein sequence, read N- to C-terminus: Small ribosomal subunit protein bS21 (70 aa).

Belongs to the bacterial ribosomal protein bS21 family.

This is Small ribosomal subunit protein bS21 from Campylobacter curvus (strain 525.92).